The following is a 241-amino-acid chain: Dephospho-CoA kinase CAB5 (241 aa).

The DPCK domain occupies 3–211 (VVGLTGGIAC…PSKLRTVLEY (209 aa)). ATP is bound at residue 8 to 15 (GGIACGKS).

This sequence belongs to the CoaE family.

It localises to the endoplasmic reticulum. The protein localises to the mitochondrion. Its subcellular location is the nucleus. The enzyme catalyses 3'-dephospho-CoA + ATP = ADP + CoA + H(+). The protein operates within cofactor biosynthesis; coenzyme A biosynthesis; CoA from (R)-pantothenate: step 5/5. Functionally, catalyzes the phosphorylation of the 3'-hydroxyl group of dephosphocoenzyme A to form coenzyme A. This chain is Dephospho-CoA kinase CAB5 (CAB5), found in Saccharomyces cerevisiae (strain ATCC 204508 / S288c) (Baker's yeast).